Consider the following 886-residue polypeptide: Valine--tRNA ligase (886 aa).

A 'HIGH' region motif is present at residues 53–63; sequence PNVTGSLHMGH. The 'KMSKS' region signature appears at 540-544; that stretch reads KMSKS. Lysine 543 contacts ATP. The stretch at 820–851 forms a coiled coil; that stretch reads IDVAAERRRMEKDLAAAQKELASTAAKLANAD.

The protein belongs to the class-I aminoacyl-tRNA synthetase family. ValS type 1 subfamily. Monomer.

The protein resides in the cytoplasm. It catalyses the reaction tRNA(Val) + L-valine + ATP = L-valyl-tRNA(Val) + AMP + diphosphate. In terms of biological role, catalyzes the attachment of valine to tRNA(Val). As ValRS can inadvertently accommodate and process structurally similar amino acids such as threonine, to avoid such errors, it has a 'posttransfer' editing activity that hydrolyzes mischarged Thr-tRNA(Val) in a tRNA-dependent manner. The polypeptide is Valine--tRNA ligase (Mycobacterium leprae (strain TN)).